The sequence spans 184 residues: Oligoribonuclease (184 aa).

An Exonuclease domain is found at 7 to 170 (LIWIDLEMTG…DDIYESIEEL (164 aa)). Tyr128 is an active-site residue.

Belongs to the oligoribonuclease family.

The protein localises to the cytoplasm. In terms of biological role, 3'-to-5' exoribonuclease specific for small oligoribonucleotides. The chain is Oligoribonuclease from Hydrogenovibrio crunogenus (strain DSM 25203 / XCL-2) (Thiomicrospira crunogena).